The primary structure comprises 426 residues: Tektin-1 (426 aa).

3 coiled-coil regions span residues 21–84 (KNQY…LEQL), 268–307 (LKETKAARDQLAAHLAKVMEEIACQEKNMTVLEKAILDQE), and 339–383 (KEVG…ENTI). The tract at residues 396–426 (SNPLRDGGDQGQWARACAPTPSAEDGTSHTD) is disordered.

It belongs to the tektin family. As to quaternary structure, microtubule inner protein component of sperm flagellar doublet microtubules. In terms of processing, ubiquitinated, leading to its degradation. Deubiquitinated by USP16, promoting its stability.

It is found in the cytoplasm. Its subcellular location is the cytoskeleton. The protein localises to the cilium axoneme. It localises to the flagellum axoneme. Functionally, microtubule inner protein (MIP) part of the dynein-decorated doublet microtubules (DMTs) in cilia and flagellar axoneme. Forms filamentous polymers in the walls of ciliary and flagellar microtubules. The sequence is that of Tektin-1 (TEKT1) from Canis lupus familiaris (Dog).